The chain runs to 382 residues: uncharacterized protein (382 aa).

One can recognise a PE domain in the interval 1-92 (MQFLSVIPEQ…GATAYRNTEF (92 aa)). 8 helical membrane-spanning segments follow: residues 23–43 (SALS…VSAA), 155–175 (AAVA…NGVV), 203–223 (FIVA…AVVG), 230–250 (TFLT…LAGV), 261–281 (LASG…VQLF), 284–304 (AFLL…IAVV), 315–335 (LVVP…AQFA), and 347–367 (LGAP…QGIG).

This sequence belongs to the mycobacterial PE family.

The protein localises to the cell membrane. This is an uncharacterized protein from Mycobacterium bovis (strain ATCC BAA-935 / AF2122/97).